The primary structure comprises 699 residues: D-(-)-3-hydroxybutyrate oligomer hydrolase (699 aa).

A signal peptide spans 1–33; the sequence is MTAIRGGSRRAPGLALALLGGVLLGACHGDENA. Residue Ser311 is the Charge relay system of the active site.

It belongs to the D-(-)-3-hydroxybutyrate oligomer hydrolase family.

Its subcellular location is the secreted. It catalyses the reaction (3R)-hydroxybutanoate dimer + H2O = 2 (R)-3-hydroxybutanoate + H(+). The protein operates within lipid metabolism; butanoate metabolism. Functionally, participates in the degradation of poly-3-hydroxybutyrate (PHB). It works downstream of poly(3-hydroxybutyrate) depolymerase, hydrolyzing D(-)-3-hydroxybutyrate oligomers of various length (3HB-oligomers) into 3HB-monomers. The sequence is that of D-(-)-3-hydroxybutyrate oligomer hydrolase from Burkholderia mallei (strain NCTC 10247).